A 90-amino-acid chain; its full sequence is Small ribosomal subunit protein uS17 (90 aa).

Belongs to the universal ribosomal protein uS17 family. Part of the 30S ribosomal subunit.

Functionally, one of the primary rRNA binding proteins, it binds specifically to the 5'-end of 16S ribosomal RNA. This Methylobacillus flagellatus (strain ATCC 51484 / DSM 6875 / VKM B-1610 / KT) protein is Small ribosomal subunit protein uS17.